Consider the following 503-residue polypeptide: ATP synthase subunit beta (503 aa).

157 to 164 (GGAGVGKT) contacts ATP.

It belongs to the ATPase alpha/beta chains family. In terms of assembly, F-type ATPases have 2 components, CF(1) - the catalytic core - and CF(0) - the membrane proton channel. CF(1) has five subunits: alpha(3), beta(3), gamma(1), delta(1), epsilon(1). CF(0) has three main subunits: a(1), b(2) and c(9-12). The alpha and beta chains form an alternating ring which encloses part of the gamma chain. CF(1) is attached to CF(0) by a central stalk formed by the gamma and epsilon chains, while a peripheral stalk is formed by the delta and b chains.

The protein localises to the cell inner membrane. It carries out the reaction ATP + H2O + 4 H(+)(in) = ADP + phosphate + 5 H(+)(out). Produces ATP from ADP in the presence of a proton gradient across the membrane. The catalytic sites are hosted primarily by the beta subunits. In Flavobacterium johnsoniae (strain ATCC 17061 / DSM 2064 / JCM 8514 / BCRC 14874 / CCUG 350202 / NBRC 14942 / NCIMB 11054 / UW101) (Cytophaga johnsonae), this protein is ATP synthase subunit beta.